Consider the following 525-residue polypeptide: MALDIHAHRILILDFGSQYTQLIARRVREIGVYCELHPFDMDDEAIREFNPRGIILAGGPESVHEANSPRAPQAVFDLNVPVLGICYGMQTMAEQMGGKVEGSDLREFGYARVDVVGKSRLLDGIEDHVDDDGVLGLDVWMSHGDKVTQMPGNFNILASTPSCPIAGMYDDARGYYGVQFHPEVTHTKQGGRILSRFVQDICGCEALWTASNIVEDAIAQVRAQVGSANVLLGLSGGVDSSVVAALLHRAIGDQLTCVFVDNGLLRLHEGDQVMAMFKENMGVKVIRADAEKQFLDNLEGEADPEKKRKIIGRTFIDIFDAEASKLENIQFLAQGTIYPDVIESAGAKSGKAHVIKSHHNVGGLPEEMNLKLVEPLRELFKDEVRKIGLELGLPYDMVYRHPFPGPGLGVRILGEVKKEYADILRRADHIFIEELRKADWYHKTSQAFVVFQPVKSVGVVGDGRRYAWVVALRAVETVDFMTARWAHLPYELLETVSGRIINEIDGISRVTYDVSSKPPATIEWE.

In terms of domain architecture, Glutamine amidotransferase type-1 spans 9–207 (RILILDFGSQ…VQDICGCEAL (199 aa)). Cys86 serves as the catalytic Nucleophile. Residues His181 and Glu183 contribute to the active site. Residues 208 to 400 (WTASNIVEDA…LGLPYDMVYR (193 aa)) form the GMPS ATP-PPase domain. ATP is bound at residue 235–241 (SGGVDSS).

Homodimer.

The catalysed reaction is XMP + L-glutamine + ATP + H2O = GMP + L-glutamate + AMP + diphosphate + 2 H(+). It participates in purine metabolism; GMP biosynthesis; GMP from XMP (L-Gln route): step 1/1. Its function is as follows. Catalyzes the synthesis of GMP from XMP. The polypeptide is GMP synthase [glutamine-hydrolyzing] (Pseudomonas putida (strain GB-1)).